A 437-amino-acid chain; its full sequence is tRNA-queuosine alpha-mannosyltransferase (437 aa).

The protein belongs to the glycosyltransferase group 1 family. Glycosyltransferase 4 subfamily.

The protein resides in the cytoplasm. It is found in the nucleus. The enzyme catalyses queuosine(34) in tRNA(Asp) + GDP-alpha-D-mannose = O-4''-alpha-D-mannosylqueuosine(34) in tRNA(Asp) + GDP + H(+). Its function is as follows. Glycosyltransferase that specifically catalyzes mannosylation of cytoplasmic tRNA(Asp) modified with queuosine at position 34 (queuosine(34)). Mannosylates the cyclopentene moiety of queuosine(34) in tRNA(Asp) to form mannosyl-queuosine(34). Mannosylation of queuosine(34) in tRNA(Asp) is required to slow-down elongation at cognate codons, GAC and GAU, thereby regulating protein translation. This chain is tRNA-queuosine alpha-mannosyltransferase (gtdc1), found in Xenopus tropicalis (Western clawed frog).